Consider the following 442-residue polypeptide: UDP-N-acetylmuramoylalanine--D-glutamate ligase (442 aa).

Position 113–119 (113–119 (GSNGKTT)) interacts with ATP.

Belongs to the MurCDEF family.

It localises to the cytoplasm. It carries out the reaction UDP-N-acetyl-alpha-D-muramoyl-L-alanine + D-glutamate + ATP = UDP-N-acetyl-alpha-D-muramoyl-L-alanyl-D-glutamate + ADP + phosphate + H(+). Its pathway is cell wall biogenesis; peptidoglycan biosynthesis. In terms of biological role, cell wall formation. Catalyzes the addition of glutamate to the nucleotide precursor UDP-N-acetylmuramoyl-L-alanine (UMA). The sequence is that of UDP-N-acetylmuramoylalanine--D-glutamate ligase from Coxiella burnetii (strain Dugway 5J108-111).